A 79-amino-acid chain; its full sequence is Large ribosomal subunit protein bL28 (79 aa).

Belongs to the bacterial ribosomal protein bL28 family.

This chain is Large ribosomal subunit protein bL28, found in Christiangramia forsetii (strain DSM 17595 / CGMCC 1.15422 / KT0803) (Gramella forsetii).